Reading from the N-terminus, the 1035-residue chain is DNA polymerase catalytic subunit (1035 aa).

This sequence belongs to the DNA polymerase type-B family.

Its subcellular location is the host nucleus. The enzyme catalyses DNA(n) + a 2'-deoxyribonucleoside 5'-triphosphate = DNA(n+1) + diphosphate. This Macaca mulatta (Rhesus macaque) protein is DNA polymerase catalytic subunit (UL54).